An 833-amino-acid chain; its full sequence is Transmembrane protease serine 7 (833 aa).

Residues 1–62 lie on the Cytoplasmic side of the membrane; it reads MDKEKSDPSC…RAPFWNVQNK (62 aa). The tract at residues 30-49 is disordered; the sequence is KLPGRRLPRKPIGKARPRKQ. The span at 32–49 shows a compositional bias: basic residues; sequence PGRRLPRKPIGKARPRKQ. A helical; Signal-anchor for type II membrane protein transmembrane segment spans residues 63 to 83; sequence IILFTVFLFILAVTAWTLLWL. At 84-829 the chain is on the extracellular side; sequence YISKTDSKDA…NFVPWIHKYV (746 aa). The SEA domain maps to 92–220; the sequence is DAFYFVGMFR…DSVVLNAGLR (129 aa). Asn196 carries an N-linked (GlcNAc...) asparagine glycan. Intrachain disulfides connect Cys233/Cys259, Cys285/Cys312, and Cys355/Cys386. 2 CUB domains span residues 233 to 350 and 355 to 471; these read CSQY…FEVI and CENT…YNIS. N-linked (GlcNAc...) asparagine glycans are attached at residues Asn405 and Asn469. LDL-receptor class A domains follow at residues 473 to 509 and 548 to 585; these read PCPAGSFRCSSGLCVPQAQRCDGVNDCFDESDELFCV and PCTNRTFKCGNDICFRKQNAQCDGIVDCPDRSDEEGCG. Disulfide bonds link Cys474-Cys486, Cys481-Cys499, Cys493-Cys508, Cys549-Cys561, Cys556-Cys575, Cys569-Cys584, and Cys621-Cys637. Positions 596–830 constitute a Peptidase S1 domain; the sequence is VVGGSDSQEG…FVPWIHKYVP (235 aa). Catalysis depends on charge relay system residues His636 and Asp684. Disulfide bonds link Cys720-Cys786, Cys752-Cys765, and Cys776-Cys806. Ser780 (charge relay system) is an active-site residue.

It belongs to the peptidase S1 family. Forms a heterodimer with SERPINA5. In terms of processing, N-glycosylated.

The protein resides in the cell membrane. Functionally, serine protease which preferentially hydrolyzes peptides with Arg at the P1 position. The chain is Transmembrane protease serine 7 from Rattus norvegicus (Rat).